We begin with the raw amino-acid sequence, 86 residues long: Small ribosomal subunit protein uS15 (86 aa).

This sequence belongs to the universal ribosomal protein uS15 family. Part of the 30S ribosomal subunit. Forms a bridge to the 50S subunit in the 70S ribosome, contacting the 23S rRNA.

One of the primary rRNA binding proteins, it binds directly to 16S rRNA where it helps nucleate assembly of the platform of the 30S subunit by binding and bridging several RNA helices of the 16S rRNA. Functionally, forms an intersubunit bridge (bridge B4) with the 23S rRNA of the 50S subunit in the ribosome. The protein is Small ribosomal subunit protein uS15 of Endomicrobium trichonymphae.